The sequence spans 118 residues: Protein TusC (118 aa).

This sequence belongs to the DsrF/TusC family. In terms of assembly, heterohexamer, formed by a dimer of trimers. The hexameric TusBCD complex contains 2 copies each of TusB, TusC and TusD. The TusBCD complex interacts with TusE.

It localises to the cytoplasm. Part of a sulfur-relay system required for 2-thiolation of 5-methylaminomethyl-2-thiouridine (mnm(5)s(2)U) at tRNA wobble positions. The sequence is that of Protein TusC from Salmonella agona (strain SL483).